The sequence spans 243 residues: tRNA (guanine-N(7)-)-methyltransferase (243 aa).

Residues E74, E99, D126, and D149 each contribute to the S-adenosyl-L-methionine site. D149 is a catalytic residue. Substrate-binding positions include K153, D185, and 221 to 224 (TKFE).

This sequence belongs to the class I-like SAM-binding methyltransferase superfamily. TrmB family.

The catalysed reaction is guanosine(46) in tRNA + S-adenosyl-L-methionine = N(7)-methylguanosine(46) in tRNA + S-adenosyl-L-homocysteine. It participates in tRNA modification; N(7)-methylguanine-tRNA biosynthesis. In terms of biological role, catalyzes the formation of N(7)-methylguanine at position 46 (m7G46) in tRNA. The sequence is that of tRNA (guanine-N(7)-)-methyltransferase from Psychromonas ingrahamii (strain DSM 17664 / CCUG 51855 / 37).